A 339-amino-acid chain; its full sequence is Phosphoribosylformylglycinamidine cyclo-ligase (339 aa).

It belongs to the AIR synthase family.

Its subcellular location is the cytoplasm. It catalyses the reaction 2-formamido-N(1)-(5-O-phospho-beta-D-ribosyl)acetamidine + ATP = 5-amino-1-(5-phospho-beta-D-ribosyl)imidazole + ADP + phosphate + H(+). It participates in purine metabolism; IMP biosynthesis via de novo pathway; 5-amino-1-(5-phospho-D-ribosyl)imidazole from N(2)-formyl-N(1)-(5-phospho-D-ribosyl)glycinamide: step 2/2. This chain is Phosphoribosylformylglycinamidine cyclo-ligase, found in Fusobacterium nucleatum subsp. nucleatum (strain ATCC 25586 / DSM 15643 / BCRC 10681 / CIP 101130 / JCM 8532 / KCTC 2640 / LMG 13131 / VPI 4355).